Consider the following 400-residue polypeptide: tRNA-specific 2-thiouridylase MnmA (400 aa).

ATP contacts are provided by residues 19–26 (AMSGGVDS) and Leu45. The active-site Nucleophile is Cys113. An intrachain disulfide couples Cys113 to Cys210. Gly137 is an ATP binding site. The interaction with tRNA stretch occupies residues 160-162 (RDQ). Catalysis depends on Cys210, which acts as the Cysteine persulfide intermediate.

Belongs to the MnmA/TRMU family.

Its subcellular location is the cytoplasm. It catalyses the reaction S-sulfanyl-L-cysteinyl-[protein] + uridine(34) in tRNA + AH2 + ATP = 2-thiouridine(34) in tRNA + L-cysteinyl-[protein] + A + AMP + diphosphate + H(+). Its function is as follows. Catalyzes the 2-thiolation of uridine at the wobble position (U34) of tRNA, leading to the formation of s(2)U34. The chain is tRNA-specific 2-thiouridylase MnmA from Nitrobacter hamburgensis (strain DSM 10229 / NCIMB 13809 / X14).